The sequence spans 382 residues: Elongation factor Tu (382 aa).

GTP contacts are provided by residues 1–7, 62–66, and 117–120; these read HVDHGKT, DCPGH, and NKVD. The tr-type G domain occupies 1 to 190; the sequence is HVDHGKTTLT…AVDEYIPTPQ (190 aa). Mg(2+) is bound at residue threonine 7.

This sequence belongs to the TRAFAC class translation factor GTPase superfamily. Classic translation factor GTPase family. EF-Tu/EF-1A subfamily. Monomer.

It localises to the cytoplasm. The enzyme catalyses GTP + H2O = GDP + phosphate + H(+). Its function is as follows. GTP hydrolase that promotes the GTP-dependent binding of aminoacyl-tRNA to the A-site of ribosomes during protein biosynthesis. The sequence is that of Elongation factor Tu from Chloroflexus aurantiacus.